The sequence spans 358 residues: Histidinol-phosphate aminotransferase (358 aa).

An N6-(pyridoxal phosphate)lysine modification is found at Lys-210.

The protein belongs to the class-II pyridoxal-phosphate-dependent aminotransferase family. Histidinol-phosphate aminotransferase subfamily. Homodimer. Requires pyridoxal 5'-phosphate as cofactor.

It carries out the reaction L-histidinol phosphate + 2-oxoglutarate = 3-(imidazol-4-yl)-2-oxopropyl phosphate + L-glutamate. It participates in amino-acid biosynthesis; L-histidine biosynthesis; L-histidine from 5-phospho-alpha-D-ribose 1-diphosphate: step 7/9. This is Histidinol-phosphate aminotransferase from Clostridium beijerinckii (strain ATCC 51743 / NCIMB 8052) (Clostridium acetobutylicum).